A 557-amino-acid chain; its full sequence is 2-isopropylmalate synthase (557 aa).

Residues 33-307 (PIWCSSDLRD…DPQLDFSDID (275 aa)) enclose the Pyruvate carboxyltransferase domain. Residues Asp42, His246, His248, and Asn282 each coordinate Mg(2+). Positions 439–557 (ANAPYALVSH…SLSQQEAKAA (119 aa)) are regulatory domain.

This sequence belongs to the alpha-IPM synthase/homocitrate synthase family. LeuA type 2 subfamily. Homodimer. Requires Mg(2+) as cofactor.

The protein resides in the cytoplasm. It carries out the reaction 3-methyl-2-oxobutanoate + acetyl-CoA + H2O = (2S)-2-isopropylmalate + CoA + H(+). It functions in the pathway amino-acid biosynthesis; L-leucine biosynthesis; L-leucine from 3-methyl-2-oxobutanoate: step 1/4. Catalyzes the condensation of the acetyl group of acetyl-CoA with 3-methyl-2-oxobutanoate (2-ketoisovalerate) to form 3-carboxy-3-hydroxy-4-methylpentanoate (2-isopropylmalate). The protein is 2-isopropylmalate synthase of Pseudomonas putida (strain GB-1).